Consider the following 952-residue polypeptide: Translation initiation factor IF-2 (952 aa).

Disordered stretches follow at residues 74-95 (QRRL…RQLK), 153-204 (AAQA…KEEP), 230-256 (MHSP…EQAD), and 273-319 (DEKG…DVND). Over residues 153–168 (AAQADQTDQTDQTDQA) the composition is skewed to low complexity. The span at 232 to 242 (SPFDRSSEAER) shows a compositional bias: basic and acidic residues. Residues 286–303 (PGETNAATPAGTASTAGA) show a composition bias toward low complexity. Residues 449–619 (IRPPVITIMG…LAEAEIRELK (171 aa)) enclose the tr-type G domain. The tract at residues 458 to 465 (GHVDHGKT) is G1. 458–465 (GHVDHGKT) serves as a coordination point for GTP. The segment at 483–487 (GITQH) is G2. Positions 505-508 (DTPG) are G3. GTP contacts are provided by residues 505 to 509 (DTPGH) and 559 to 562 (NKVD). The tract at residues 559-562 (NKVD) is G4. A G5 region spans residues 595–597 (SAK).

Belongs to the TRAFAC class translation factor GTPase superfamily. Classic translation factor GTPase family. IF-2 subfamily.

The protein resides in the cytoplasm. One of the essential components for the initiation of protein synthesis. Protects formylmethionyl-tRNA from spontaneous hydrolysis and promotes its binding to the 30S ribosomal subunits. Also involved in the hydrolysis of GTP during the formation of the 70S ribosomal complex. This is Translation initiation factor IF-2 from Chlorobium limicola (strain DSM 245 / NBRC 103803 / 6330).